Here is a 405-residue protein sequence, read N- to C-terminus: Cytoplasmic polyadenylated homeobox-like protein (405 aa).

Disordered regions lie at residues 1-33 (MNLD…KHRH) and 340-363 (PWDL…QNNG). Positions 13–23 (EEDHHNEERQT) are enriched in basic and acidic residues. Residues 24-33 (KNKRKTKHRH) are compositionally biased toward basic residues. Positions 28–87 (KTKHRHKFSEELLQELKEIFGENCYPDYTTRKTLAIKFDCPVNVIDNWFQNKRARLPPAE) form a DNA-binding region, homeobox. Over residues 346-360 (QWSSAQSQLQSQLPQ) the composition is skewed to low complexity.

Its subcellular location is the nucleus. Transcription factor that acts as activator. This is Cytoplasmic polyadenylated homeobox-like protein from Homo sapiens (Human).